The primary structure comprises 229 residues: Glutamine amidotransferase-like class 1 domain-containing protein 1 (229 aa).

The N-terminal stretch at 1 to 34 (MKKQGAPVSGGGTERLTKPSCLMVGSAVAEGVSA) is a signal peptide. N154 and N212 each carry an N-linked (GlcNAc...) asparagine glycan.

This sequence belongs to the peptidase C56 family. Homotetramer. Component of the FERRY complex.

The protein resides in the secreted. It is found in the early endosome. Functionally, component of the FERRY complex (Five-subunit Endosomal Rab5 and RNA/ribosome intermediary). The FERRY complex directly interacts with mRNAs and RAB5A, and functions as a RAB5A effector involved in the localization and the distribution of specific mRNAs most likely by mediating their endosomal transport. The complex recruits mRNAs and ribosomes to early endosomes through direct mRNA-interaction. The protein is Glutamine amidotransferase-like class 1 domain-containing protein 1 of Xenopus laevis (African clawed frog).